Here is a 157-residue protein sequence, read N- to C-terminus: Catabolic 3-dehydroquinase (157 aa).

Residue Y27 is the Proton acceptor of the active site. N80, H86, and D93 together coordinate substrate. Catalysis depends on H106, which acts as the Proton donor. Substrate is bound by residues 107-108 (VS) and R117.

This sequence belongs to the type-II 3-dehydroquinase family. In terms of assembly, homododecamer. Adopts a ring-like structure, composed of an arrangement of two hexameric rings stacked on top of one another.

The enzyme catalyses 3-dehydroquinate = 3-dehydroshikimate + H2O. The protein operates within aromatic compound metabolism; 3,4-dihydroxybenzoate biosynthesis; 3,4-dihydroxybenzoate from 3-dehydroquinate: step 1/2. Is involved in the catabolism of quinate. Allows the utilization of quinate as carbon source via the beta-ketoadipate pathway. This is Catabolic 3-dehydroquinase from Pyricularia oryzae (strain 70-15 / ATCC MYA-4617 / FGSC 8958) (Rice blast fungus).